Reading from the N-terminus, the 91-residue chain is Large ribosomal subunit protein uL23c (91 aa).

Belongs to the universal ribosomal protein uL23 family. As to quaternary structure, part of the 50S ribosomal subunit.

The protein resides in the plastid. Its subcellular location is the chloroplast. Binds to 23S rRNA. The sequence is that of Large ribosomal subunit protein uL23c (rpl23) from Pinus thunbergii (Japanese black pine).